Here is a 598-residue protein sequence, read N- to C-terminus: Elongation factor 4 (598 aa).

The 183-residue stretch at 2–184 folds into the tr-type G domain; that stretch reads KNIRNFSIIA…EIVRCIPPPV (183 aa). Residues 14 to 19 and 131 to 134 each bind GTP; these read DHGKST and NKID.

It belongs to the TRAFAC class translation factor GTPase superfamily. Classic translation factor GTPase family. LepA subfamily.

The protein localises to the cell inner membrane. It catalyses the reaction GTP + H2O = GDP + phosphate + H(+). Functionally, required for accurate and efficient protein synthesis under certain stress conditions. May act as a fidelity factor of the translation reaction, by catalyzing a one-codon backward translocation of tRNAs on improperly translocated ribosomes. Back-translocation proceeds from a post-translocation (POST) complex to a pre-translocation (PRE) complex, thus giving elongation factor G a second chance to translocate the tRNAs correctly. Binds to ribosomes in a GTP-dependent manner. The polypeptide is Elongation factor 4 (Psychromonas ingrahamii (strain DSM 17664 / CCUG 51855 / 37)).